Reading from the N-terminus, the 124-residue chain is Protein MGF 110-8L (124 aa).

The first 16 residues, 1-16, serve as a signal peptide directing secretion; the sequence is MKVLILVLLGVVILQA. Residue N76 is glycosylated (N-linked (GlcNAc...) asparagine; by host).

It belongs to the asfivirus MGF 110 family.

In terms of biological role, plays a role in virus cell tropism, and may be required for efficient virus replication in macrophages. In African swine fever virus (isolate Warthog/Namibia/Wart80/1980) (ASFV), this protein is Protein MGF 110-8L.